The following is a 387-amino-acid chain: Chaperone protein DnaJ (387 aa).

In terms of domain architecture, J spans 6 to 70 (DYYETLGVSR…QKRAAYDQYG (65 aa)). The CR-type zinc finger occupies 143–225 (GKDTKISYDR…CHGTGHEQER (83 aa)). Zn(2+) contacts are provided by cysteine 156, cysteine 159, cysteine 173, cysteine 176, cysteine 199, cysteine 202, cysteine 213, and cysteine 216. CXXCXGXG motif repeat units lie at residues 156 to 163 (CHTCNGSG), 173 to 180 (CHKCHGSG), 199 to 206 (CDVCGGTG), and 213 to 220 (CPTCHGTG).

It belongs to the DnaJ family. In terms of assembly, homodimer. Zn(2+) serves as cofactor.

It is found in the cytoplasm. In terms of biological role, participates actively in the response to hyperosmotic and heat shock by preventing the aggregation of stress-denatured proteins and by disaggregating proteins, also in an autonomous, DnaK-independent fashion. Unfolded proteins bind initially to DnaJ; upon interaction with the DnaJ-bound protein, DnaK hydrolyzes its bound ATP, resulting in the formation of a stable complex. GrpE releases ADP from DnaK; ATP binding to DnaK triggers the release of the substrate protein, thus completing the reaction cycle. Several rounds of ATP-dependent interactions between DnaJ, DnaK and GrpE are required for fully efficient folding. Also involved, together with DnaK and GrpE, in the DNA replication of plasmids through activation of initiation proteins. In Lacticaseibacillus paracasei (strain ATCC 334 / BCRC 17002 / CCUG 31169 / CIP 107868 / KCTC 3260 / NRRL B-441) (Lactobacillus paracasei), this protein is Chaperone protein DnaJ.